Reading from the N-terminus, the 853-residue chain is DNA mismatch repair protein MutS (853 aa).

614–621 (GPNMGGKS) serves as a coordination point for ATP.

It belongs to the DNA mismatch repair MutS family.

Functionally, this protein is involved in the repair of mismatches in DNA. It is possible that it carries out the mismatch recognition step. This protein has a weak ATPase activity. In Escherichia coli O7:K1 (strain IAI39 / ExPEC), this protein is DNA mismatch repair protein MutS.